A 659-amino-acid chain; its full sequence is MFGKLSLNSIPYHDPIIMITCCVVILVFLVISIIITIAQKWQYLWNEWCCTVDHKKIAKMYIFLAFIMLFRGFADAIMMRMQQFLVSSYHGNGTGFLPPHHYDQIFTAHGVIMIFFVAMPLVIGLMNFVVPLQIGSRDVAFPFLNNLSLWLTIFSALLMNVSLGIGEFAQTGWLAYPPLSELQYSPGVGVDYWIWSLQISGIGTTLTAINFLVTIIKMRSSGMNWFKIPVFTWTSFCTNILIIASFPVLTVSLLLLTLDRYLGFHFFTNDFGGNMMMYVNLIWIWGHPEVYILILPVFGIFSEVVATFSSKELFGYTSLIWATIVITILSFIVWLHHFFTMGASANVNAFFGITTMIISIPTGVKIFNWLFTMYRGNVRINSIMLWTIGFLITFSIGGMAGVLLSLPVIDFSLHNSLFLVAHFHNVIIGGVVFGCFAGITYWFPKLFGFMLSEKWGKRAFWCWFFGFFCAFMPLYALGLMGMTRRLSQNINPQFHSMLTIAALGTILIFIGIVFQIIQIFVSIRDRNLNRDCSGDPWNGRTLEWSTTSPPPFYNFAVLPIVQFRDSFWESKKSFKSNKLPILYTSFHMPKNTKFGFLIGFFAFLLGFSAVWYIFWLFFISFFVIIYLLVIKSLDTNCDYIISIEEIKEIEKCINIKKMD.

Topologically, residues 1–14 (MFGKLSLNSIPYHD) are extracellular. Residues 15–35 (PIIMITCCVVILVFLVISIII) traverse the membrane as a helical segment. The Cytoplasmic segment spans residues 36-56 (TIAQKWQYLWNEWCCTVDHKK). The chain crosses the membrane as a helical span at residues 57-77 (IAKMYIFLAFIMLFRGFADAI). The a ubiquinone site is built by Arg71, Asp75, and His101. At 78–109 (MMRMQQFLVSSYHGNGTGFLPPHHYDQIFTAH) the chain is on the extracellular side. His109 serves as a coordination point for heme b. Residues 110-130 (GVIMIFFVAMPLVIGLMNFVV) traverse the membrane as a helical segment. Over 131–148 (PLQIGSRDVAFPFLNNLS) the chain is Cytoplasmic. The chain crosses the membrane as a helical span at residues 149–169 (LWLTIFSALLMNVSLGIGEFA). Residues 170-192 (QTGWLAYPPLSELQYSPGVGVDY) are Extracellular-facing. Trp173 serves as a coordination point for heme b. A helical membrane pass occupies residues 193–213 (WIWSLQISGIGTTLTAINFLV). Topologically, residues 214–235 (TIIKMRSSGMNWFKIPVFTWTS) are cytoplasmic. The helical transmembrane segment at 236-256 (FCTNILIIASFPVLTVSLLLL) threads the bilayer. Topologically, residues 257-280 (TLDRYLGFHFFTNDFGGNMMMYVN) are extracellular. The helical transmembrane segment at 281-301 (LIWIWGHPEVYILILPVFGIF) threads the bilayer. Residue His287 coordinates Cu(2+). The segment at residues 287–291 (HPEVY) is a cross-link (1'-histidyl-3'-tyrosine (His-Tyr)). Position 291 (Tyr291) interacts with Fe(II)-heme o. Residues 302 to 318 (SEVVATFSSKELFGYTS) are Cytoplasmic-facing. The chain crosses the membrane as a helical span at residues 319–339 (LIWATIVITILSFIVWLHHFF). Cu(2+) contacts are provided by His336 and His337. The Extracellular segment spans residues 340 to 350 (TMGASANVNAF). The helical transmembrane segment at 351–371 (FGITTMIISIPTGVKIFNWLF) threads the bilayer. Topologically, residues 372–382 (TMYRGNVRINS) are cytoplasmic. Residues 383–403 (IMLWTIGFLITFSIGGMAGVL) form a helical membrane-spanning segment. Residues 404–416 (LSLPVIDFSLHNS) lie on the Extracellular side of the membrane. Fe(II)-heme o is bound by residues His414 and His422. The helical transmembrane segment at 417–437 (LFLVAHFHNVIIGGVVFGCFA) threads the bilayer. Position 424 (His424) interacts with heme b. Topologically, residues 438–459 (GITYWFPKLFGFMLSEKWGKRA) are cytoplasmic. A helical transmembrane segment spans residues 460-480 (FWCWFFGFFCAFMPLYALGLM). The Extracellular segment spans residues 481–499 (GMTRRLSQNINPQFHSMLT). Heme b contacts are provided by Arg484 and Arg485. The helical transmembrane segment at 500 to 520 (IAALGTILIFIGIVFQIIQIF) threads the bilayer. Topologically, residues 521–587 (VSIRDRNLNR…KLPILYTSFH (67 aa)) are cytoplasmic. A helical membrane pass occupies residues 588-608 (MPKNTKFGFLIGFFAFLLGFS). Ala609 is a topological domain (extracellular). The chain crosses the membrane as a helical span at residues 610 to 630 (VWYIFWLFFISFFVIIYLLVI). Residues 631–659 (KSLDTNCDYIISIEEIKEIEKCINIKKMD) lie on the Cytoplasmic side of the membrane.

It belongs to the heme-copper respiratory oxidase family. As to quaternary structure, the cytochrome bo(3) ubiquinol oxidase complex is a heterooctamer of two A chains, two B chains, two C chains and two D chains. Requires Cu(2+) as cofactor. Heme b serves as cofactor. Fe(II)-heme o is required as a cofactor.

Its subcellular location is the cell membrane. The enzyme catalyses 2 a ubiquinol + O2 + n H(+)(in) = 2 a ubiquinone + 2 H2O + n H(+)(out). In terms of biological role, cytochrome bo(3) ubiquinol oxidase is the terminal enzyme in the aerobic respiratory chain. Catalyzes the four-electron reduction of O2 to water, using a ubiquinol as a membrane soluble electron donor for molecular oxygen reduction. Has proton pump activity across the membrane in addition to electron transfer, pumping 2 protons/electron and generating a proton motive force. All the redox centers of this enzyme complex are located within the largest subunit, subunit I. Protons are probably pumped via D- and K- channels found in this subunit. The protein is Cytochrome bo(3) ubiquinol oxidase subunit 1 (cyoB) of Buchnera aphidicola subsp. Baizongia pistaciae (strain Bp).